Consider the following 261-residue polypeptide: tRNA pseudouridine synthase A (261 aa).

Aspartate 51 (nucleophile) is an active-site residue. Tyrosine 109 lines the substrate pocket.

Belongs to the tRNA pseudouridine synthase TruA family. In terms of assembly, homodimer.

The catalysed reaction is uridine(38/39/40) in tRNA = pseudouridine(38/39/40) in tRNA. Functionally, formation of pseudouridine at positions 38, 39 and 40 in the anticodon stem and loop of transfer RNAs. This is tRNA pseudouridine synthase A from Shewanella halifaxensis (strain HAW-EB4).